The following is a 207-amino-acid chain: Large ribosomal subunit protein uL4 (207 aa).

Residues histidine 49 to arginine 79 are disordered.

This sequence belongs to the universal ribosomal protein uL4 family. In terms of assembly, part of the 50S ribosomal subunit.

Its function is as follows. One of the primary rRNA binding proteins, this protein initially binds near the 5'-end of the 23S rRNA. It is important during the early stages of 50S assembly. It makes multiple contacts with different domains of the 23S rRNA in the assembled 50S subunit and ribosome. Functionally, forms part of the polypeptide exit tunnel. The chain is Large ribosomal subunit protein uL4 from Heliobacterium modesticaldum (strain ATCC 51547 / Ice1).